A 364-amino-acid chain; its full sequence is Protein leg1b (364 aa).

Positions 1–22 (MSEMGFLRSVAAVLLLAVFSHA) are cleaved as a signal peptide. N-linked (GlcNAc...) asparagine glycosylation occurs at Asn-70.

The protein belongs to the LEG1 family. In terms of tissue distribution, detected in all tissues tested, with the highest levels in serum (at protein level). At mRNA level, only expressed in liver.

It localises to the secreted. Functionally, involved in early development of liver, exocrine pancreas and intestine, probably through cell cycle regulation. In liver, its function is partially redundant with leg1a function. The protein is Protein leg1b of Danio rerio (Zebrafish).